Consider the following 320-residue polypeptide: Cytochrome f (320 aa).

The first 35 residues, 1-35, serve as a signal peptide directing secretion; that stretch reads MQTRNAFSWIKKEITRSISVLLMIYIITRAPISNA. 4 residues coordinate heme: Y36, C56, C59, and H60. The chain crosses the membrane as a helical span at residues 286-305; the sequence is VQGLLLFLASIILAQIFLVL.

It belongs to the cytochrome f family. In terms of assembly, the 4 large subunits of the cytochrome b6-f complex are cytochrome b6, subunit IV (17 kDa polypeptide, petD), cytochrome f and the Rieske protein, while the 4 small subunits are PetG, PetL, PetM and PetN. The complex functions as a dimer. Requires heme as cofactor.

It localises to the plastid. The protein resides in the chloroplast thylakoid membrane. Functionally, component of the cytochrome b6-f complex, which mediates electron transfer between photosystem II (PSII) and photosystem I (PSI), cyclic electron flow around PSI, and state transitions. This is Cytochrome f (petA) from Vicia faba (Broad bean).